Reading from the N-terminus, the 373-residue chain is Carbamoyl phosphate synthase small chain (373 aa).

The interval 1–179 (MSGKAQLVLE…AYIVEPEGPP (179 aa)) is CPSase. L-glutamine is bound by residues Ser47, Gly230, and Gly232. The Glutamine amidotransferase type-1 domain maps to 182–373 (TVAALDLGIK…QFIELMEGDR (192 aa)). Residue Cys258 is the Nucleophile of the active site. Residues Phe259, Gln262, Asn300, Gly302, and Phe303 each coordinate L-glutamine. Active-site residues include His348 and Glu350.

Belongs to the CarA family. Composed of two chains; the small (or glutamine) chain promotes the hydrolysis of glutamine to ammonia, which is used by the large (or ammonia) chain to synthesize carbamoyl phosphate. Tetramer of heterodimers (alpha,beta)4.

The enzyme catalyses hydrogencarbonate + L-glutamine + 2 ATP + H2O = carbamoyl phosphate + L-glutamate + 2 ADP + phosphate + 2 H(+). It catalyses the reaction L-glutamine + H2O = L-glutamate + NH4(+). Its pathway is amino-acid biosynthesis; L-arginine biosynthesis; carbamoyl phosphate from bicarbonate: step 1/1. The protein operates within pyrimidine metabolism; UMP biosynthesis via de novo pathway; (S)-dihydroorotate from bicarbonate: step 1/3. In terms of biological role, small subunit of the glutamine-dependent carbamoyl phosphate synthetase (CPSase). CPSase catalyzes the formation of carbamoyl phosphate from the ammonia moiety of glutamine, carbonate, and phosphate donated by ATP, constituting the first step of 2 biosynthetic pathways, one leading to arginine and/or urea and the other to pyrimidine nucleotides. The small subunit (glutamine amidotransferase) binds and cleaves glutamine to supply the large subunit with the substrate ammonia. The polypeptide is Carbamoyl phosphate synthase small chain (Mycolicibacterium paratuberculosis (strain ATCC BAA-968 / K-10) (Mycobacterium paratuberculosis)).